The sequence spans 1384 residues: DNA-directed RNA polymerase subunit beta (1384 aa).

The protein belongs to the RNA polymerase beta chain family. As to quaternary structure, the RNAP catalytic core consists of 2 alpha, 1 beta, 1 beta' and 1 omega subunit. When a sigma factor is associated with the core the holoenzyme is formed, which can initiate transcription.

The catalysed reaction is RNA(n) + a ribonucleoside 5'-triphosphate = RNA(n+1) + diphosphate. In terms of biological role, DNA-dependent RNA polymerase catalyzes the transcription of DNA into RNA using the four ribonucleoside triphosphates as substrates. In Xylella fastidiosa (strain M23), this protein is DNA-directed RNA polymerase subunit beta.